Here is a 572-residue protein sequence, read N- to C-terminus: Hemagglutinin-neuraminidase (572 aa).

Residues 1 to 31 (MEYWKHTNHGKDACNELGTSMATHGNKITNK) are Intravirion-facing. A helical membrane pass occupies residues 32–52 (ITYILWTIILVLLSIIFIIVL). The Virion surface segment spans residues 53–572 (INSIKSEKAH…FKTEIPKSCS (520 aa)). Intrachain disulfides connect Cys190–Cys214 and Cys256–Cys269. The involved in neuraminidase activity stretch occupies residues 252 to 257 (NRKSCS). 2 N-linked (GlcNAc...) asparagine; by host glycosylation sites follow: Asn308 and Asn351. Disulfide bonds link Cys355–Cys469 and Cys463–Cys473. Asn523 carries an N-linked (GlcNAc...) asparagine; by host glycan. Cysteines 535 and 544 form a disulfide.

This sequence belongs to the paramyxoviruses hemagglutinin-neuraminidase family. Homotetramer; composed of disulfide-linked homodimers. Interacts with F protein trimer.

Its subcellular location is the virion membrane. It is found in the host cell membrane. The catalysed reaction is Hydrolysis of alpha-(2-&gt;3)-, alpha-(2-&gt;6)-, alpha-(2-&gt;8)- glycosidic linkages of terminal sialic acid residues in oligosaccharides, glycoproteins, glycolipids, colominic acid and synthetic substrates.. In terms of biological role, attaches the virus to sialic acid-containing cell receptors and thereby initiating infection. Binding of HN protein to the receptor induces a conformational change that allows the F protein to trigger virion/cell membranes fusion. Functionally, neuraminidase activity ensures the efficient spread of the virus by dissociating the mature virions from the neuraminic acid containing glycoproteins. The chain is Hemagglutinin-neuraminidase (HN) from Homo sapiens (Human).